Here is a 344-residue protein sequence, read N- to C-terminus: Ferrochelatase (344 aa).

Residues histidine 196 and glutamate 277 each coordinate Fe cation.

It belongs to the ferrochelatase family.

It localises to the cytoplasm. The catalysed reaction is heme b + 2 H(+) = protoporphyrin IX + Fe(2+). Its pathway is porphyrin-containing compound metabolism; protoheme biosynthesis; protoheme from protoporphyrin-IX: step 1/1. Its function is as follows. Catalyzes the ferrous insertion into protoporphyrin IX. The polypeptide is Ferrochelatase (Synechococcus sp. (strain JA-2-3B'a(2-13)) (Cyanobacteria bacterium Yellowstone B-Prime)).